We begin with the raw amino-acid sequence, 420 residues long: L-rhamnose isomerase (420 aa).

Residues His262, Asp294, and Asp296 each contribute to the Mn(2+) site.

This sequence belongs to the rhamnose isomerase family. As to quaternary structure, homotetramer. It depends on Mn(2+) as a cofactor.

It is found in the cytoplasm. It catalyses the reaction L-rhamnopyranose = L-rhamnulose. The protein operates within carbohydrate degradation; L-rhamnose degradation; glycerone phosphate from L-rhamnose: step 1/3. Its function is as follows. Catalyzes the interconversion of L-rhamnose and L-rhamnulose. This chain is L-rhamnose isomerase, found in Pectobacterium carotovorum subsp. carotovorum (strain PC1).